Here is a 271-residue protein sequence, read N- to C-terminus: Phosphatidylglycerol--prolipoprotein diacylglyceryl transferase (271 aa).

The next 7 membrane-spanning stretches (helical) occupy residues 25 to 45, 60 to 80, 103 to 123, 134 to 154, 181 to 201, 209 to 229, and 235 to 255; these read WYGIMYVIALLLALLLAKFFV, YFIWVEIGVILGARLGYILIY, FVGIRGMSYHGAIIGFLIATL, WIFLDLVALSVPLAYVFGRIG, PSQLYEAFLEGIVVFIIVYLA, GELILVYAGAYSLARFICEFY, and GIGFVLWGMSMGQILSFIMFI. R152 is an a 1,2-diacyl-sn-glycero-3-phospho-(1'-sn-glycerol) binding site.

It belongs to the Lgt family.

It localises to the cell inner membrane. It catalyses the reaction L-cysteinyl-[prolipoprotein] + a 1,2-diacyl-sn-glycero-3-phospho-(1'-sn-glycerol) = an S-1,2-diacyl-sn-glyceryl-L-cysteinyl-[prolipoprotein] + sn-glycerol 1-phosphate + H(+). Its pathway is protein modification; lipoprotein biosynthesis (diacylglyceryl transfer). Catalyzes the transfer of the diacylglyceryl group from phosphatidylglycerol to the sulfhydryl group of the N-terminal cysteine of a prolipoprotein, the first step in the formation of mature lipoproteins. The protein is Phosphatidylglycerol--prolipoprotein diacylglyceryl transferase of Campylobacter jejuni subsp. jejuni serotype O:6 (strain 81116 / NCTC 11828).